Reading from the N-terminus, the 237-residue chain is Tyrosine-protein kinase YwqD (237 aa).

Tyr-228 bears the Phosphotyrosine; by autocatalysis mark.

It belongs to the CpsD/CapB family. Post-translationally, autophosphorylated in vitro, which inhibits ATPase activity. Dephosphorylated by YwqE in vitro.

The catalysed reaction is L-tyrosyl-[protein] + ATP = O-phospho-L-tyrosyl-[protein] + ADP + H(+). May be involved in the regulation of capsular polysaccharide biosynthesis. Autophosphorylates in vitro. Phosphorylates and activates in vitro two UDP-glucose dehydrogenases, YwqF and TuaD, as well as the DNA-binding proteins Ssb and SsbB. The chain is Tyrosine-protein kinase YwqD (ywqD) from Bacillus subtilis (strain 168).